Consider the following 589-residue polypeptide: Aspartate--tRNA ligase (589 aa).

Glu-171 provides a ligand contact to L-aspartate. The segment at 195–198 (QLFK) is aspartate. Residue Arg-217 coordinates L-aspartate. Residues 217 to 219 (RDE) and Gln-226 contribute to the ATP site. His-448 contributes to the L-aspartate binding site. Position 482 (Glu-482) interacts with ATP. Residue Arg-489 participates in L-aspartate binding. Residue 534-537 (GLDR) coordinates ATP.

Belongs to the class-II aminoacyl-tRNA synthetase family. Type 1 subfamily. In terms of assembly, homodimer.

Its subcellular location is the cytoplasm. It carries out the reaction tRNA(Asp) + L-aspartate + ATP = L-aspartyl-tRNA(Asp) + AMP + diphosphate. Its function is as follows. Catalyzes the attachment of L-aspartate to tRNA(Asp) in a two-step reaction: L-aspartate is first activated by ATP to form Asp-AMP and then transferred to the acceptor end of tRNA(Asp). This is Aspartate--tRNA ligase from Idiomarina loihiensis (strain ATCC BAA-735 / DSM 15497 / L2-TR).